We begin with the raw amino-acid sequence, 210 residues long: uncharacterized protein (210 aa).

The next 6 helical transmembrane spans lie at 9 to 29 (WVVTGLFVLTAAECGLAIIAK), 35 to 55 (LIVNHGLHFAMAVAMAVMAWP), 64 to 84 (GPAVFFLLAAVWFGATAVVAV), 91 to 111 (GLYGYHGLMMLATAWMYAAMN), 149 to 169 (IWFSAVNWIGTVGFAVAAVFW), and 190 to 210 (IGQAMMAAGMAMLFFAMLFPV).

The protein resides in the cell membrane. This is an uncharacterized protein from Mycobacterium bovis (strain ATCC BAA-935 / AF2122/97).